The chain runs to 237 residues: B3 domain-containing protein At1g20600 (237 aa).

The interval 53 to 79 (LVSQANQKQSRKREEKTEKNQPKRVKN) is disordered. Over residues 64 to 73 (KREEKTEKNQ) the composition is skewed to basic and acidic residues. A DNA-binding region (TF-B3) is located at residues 126–230 (KKQLMSSDVD…LEHVFIRGSK (105 aa)).

The protein resides in the nucleus. The polypeptide is B3 domain-containing protein At1g20600 (Arabidopsis thaliana (Mouse-ear cress)).